Here is a 176-residue protein sequence, read N- to C-terminus: Isopentenyl-diphosphate Delta-isomerase 1 (176 aa).

Mn(2+)-binding residues include histidine 23 and histidine 30. The Nudix hydrolase domain maps to 28 to 162; sequence HLHRAFSCFI…EEFCTPWFKK (135 aa). Residue cysteine 65 is part of the active site. Cysteine 65 is a Mg(2+) binding site. Histidine 67 provides a ligand contact to Mn(2+). Glutamate 85 is a Mg(2+) binding site. The Mn(2+) site is built by glutamate 112 and glutamate 114. Glutamate 114 is an active-site residue.

This sequence belongs to the IPP isomerase type 1 family. As to quaternary structure, homodimer. It depends on Mg(2+) as a cofactor. Mn(2+) is required as a cofactor.

The protein resides in the cytoplasm. It catalyses the reaction isopentenyl diphosphate = dimethylallyl diphosphate. The protein operates within isoprenoid biosynthesis; dimethylallyl diphosphate biosynthesis; dimethylallyl diphosphate from isopentenyl diphosphate: step 1/1. Functionally, catalyzes the 1,3-allylic rearrangement of the homoallylic substrate isopentenyl (IPP) to its highly electrophilic allylic isomer, dimethylallyl diphosphate (DMAPP). This chain is Isopentenyl-diphosphate Delta-isomerase 1, found in Photorhabdus laumondii subsp. laumondii (strain DSM 15139 / CIP 105565 / TT01) (Photorhabdus luminescens subsp. laumondii).